Reading from the N-terminus, the 427-residue chain is UPF0597 protein CD630_32320 (427 aa).

The protein belongs to the UPF0597 family.

The polypeptide is UPF0597 protein CD630_32320 (Clostridioides difficile (strain 630) (Peptoclostridium difficile)).